We begin with the raw amino-acid sequence, 490 residues long: Scarecrow-like transcription factor PAT1 (490 aa).

In terms of domain architecture, GRAS spans 110-490 (TLEAISRRDL…RDLVASCAWK (381 aa)). The segment at 117–178 (RDLRADLVSC…AQLASSGSSI (62 aa)) is leucine repeat I (LRI). The tract at residues 197-262 (MHILYEVCPY…GGPPRIRITG (66 aa)) is VHIID. The VHIID motif lies at 228 to 232 (VHIID). Residues 278–310 (IVGNRLAKLAKQFNVPFEFNSVSVSVSEVKPKN) are leucine repeat II (LRII). Residues 319–413 (LAVNFAFVLH…QHCLARDVVN (95 aa)) form a PFYRE region. Residues 416-490 (ACEGADRVER…RDLVASCAWK (75 aa)) are SAW.

This sequence belongs to the GRAS family.

The protein localises to the cytoplasm. Probable transcription factor involved in phytochrome A (phyA) signal transduction. The polypeptide is Scarecrow-like transcription factor PAT1 (PAT1) (Arabidopsis thaliana (Mouse-ear cress)).